Consider the following 260-residue polypeptide: Sodium channel modifier 1 (260 aa).

The Bipartite nuclear localization signal signature appears at 4–20 (KRDGDDSSQLNVLKKRR). The Matrin-type zinc finger occupies 42–74 (YACTVCHHRPVFNTIDMLSVHRTGKKHLGGLQR). Residues 143–260 (RNVYDPHSGP…EEEPPALPPS (118 aa)) form a disordered region. Residues 166 to 187 (PGPSQPHTSLHSPPTGPCSSPT) are compositionally biased toward polar residues. Positions 202–221 (KGEEKFRKEIADPERERNME) are enriched in basic and acidic residues. Residues 245 to 254 (VEFDSDEEEP) show a composition bias toward acidic residues.

Component of the minor spliceosome, which splices U12-type introns.

It is found in the nucleus. The protein resides in the nucleoplasm. It localises to the nucleus speckle. As a component of the minor spliceosome, involved in the splicing of U12-type introns in pre-mRNAs. This chain is Sodium channel modifier 1 (scnm1), found in Xenopus laevis (African clawed frog).